The sequence spans 710 residues: Methionine--tRNA ligase (710 aa).

The 'HIGH' region signature appears at 26–36 (PYANGQIHIGH). Zn(2+) contacts are provided by Cys157, Cys160, Cys170, and Cys173. The 'KMSKS' region motif lies at 347–351 (KMSKS). An ATP-binding site is contributed by Lys350. One can recognise a tRNA-binding domain in the interval 604-710 (DFAKIDLRIA…SGAKPGMRVK (107 aa)).

It belongs to the class-I aminoacyl-tRNA synthetase family. MetG type 1 subfamily. In terms of assembly, homodimer. It depends on Zn(2+) as a cofactor.

Its subcellular location is the cytoplasm. It catalyses the reaction tRNA(Met) + L-methionine + ATP = L-methionyl-tRNA(Met) + AMP + diphosphate. Its function is as follows. Is required not only for elongation of protein synthesis but also for the initiation of all mRNA translation through initiator tRNA(fMet) aminoacylation. This Paraburkholderia xenovorans (strain LB400) protein is Methionine--tRNA ligase.